Reading from the N-terminus, the 235-residue chain is Acyl-protein thioesterase 1 (235 aa).

Residues serine 125, aspartate 181, and histidine 213 each act as charge relay system in the active site.

The protein belongs to the AB hydrolase superfamily. AB hydrolase 2 family.

Its subcellular location is the cytoplasm. It is found in the nucleus. The enzyme catalyses S-hexadecanoyl-L-cysteinyl-[protein] + H2O = L-cysteinyl-[protein] + hexadecanoate + H(+). Its function is as follows. Hydrolyzes fatty acids from S-acylated cysteine residues in proteins with a strong preference for palmitoylated G-alpha proteins over other acyl substrates. Mediates the deacylation of G-alpha proteins such as GPA1 in vivo, but has weak or no activity toward palmitoylated Ras proteins. Has weak lysophospholipase activity in vitro; however such activity may not exist in vivo. The protein is Acyl-protein thioesterase 1 of Gibberella zeae (strain ATCC MYA-4620 / CBS 123657 / FGSC 9075 / NRRL 31084 / PH-1) (Wheat head blight fungus).